The following is a 118-amino-acid chain: Peptidyl-prolyl cis-trans isomerase Pin1 (118 aa).

Disordered stretches follow at residues 1-37 (MSSEKVRASHILIKHQGSRRKSSWKDPDGSLISATTR) and 61-84 (LASRHSHCSSAKRGGDLGPFGRGQ). The PpiC domain occupies 3–118 (SEKVRASHIL…SGVHIIKRTG (116 aa)). Over residues 12-22 (LIKHQGSRRKS) the composition is skewed to basic residues.

Belongs to the PpiC/parvulin rotamase family. Post-translationally, the N-terminus is blocked. Expressed in roots, stems, leaves, flowers and seedlings.

Its subcellular location is the cytoplasm. It localises to the nucleus. It catalyses the reaction [protein]-peptidylproline (omega=180) = [protein]-peptidylproline (omega=0). Its activity is regulated as follows. Inhibited in vitro by juglone. In terms of biological role, prolyl cis/trans isomerase with specificity for phospho-Ser-Pro bonds. This is Peptidyl-prolyl cis-trans isomerase Pin1 (PARV12.8) from Digitalis lanata (Grecian foxglove).